The primary structure comprises 377 residues: Palmitoyltransferase PFA4 (377 aa).

Residues 1 to 9 (MAIKLKNRW) lie on the Cytoplasmic side of the membrane. A helical membrane pass occupies residues 10–30 (LGVAIPAFLVALIGYGSHYFI). Residues 31-122 (LSNFLSWNEQ…NCVGHSNFPH (92 aa)) lie on the Lumenal side of the membrane. The DHHC domain occupies 78 to 128 (NYCKKCRVYKPERAHHCKTCNQCVLAMDHHCPWTLNCVGHSNFPHFMRFLF). Cys-108 functions as the S-palmitoyl cysteine intermediate in the catalytic mechanism. Residues 123–143 (FMRFLFWVIFSTAYLLFLLIG) traverse the membrane as a helical segment. Over 144-163 (RIYLLWSIRHTAFHHRSTSE) the chain is Cytoplasmic. The chain crosses the membrane as a helical span at residues 164–184 (IIFICIMTPMDAFVLLTVSSL). At 185–377 (LGRCIYNQCL…SDFGVDTELE (193 aa)) the chain is on the lumenal side.

This sequence belongs to the DHHC palmitoyltransferase family. PFA4 subfamily.

It localises to the endoplasmic reticulum membrane. The catalysed reaction is L-cysteinyl-[protein] + hexadecanoyl-CoA = S-hexadecanoyl-L-cysteinyl-[protein] + CoA. Mediates the reversible addition of palmitate to target proteins, thereby regulating their membrane association and biological function. The protein is Palmitoyltransferase PFA4 of Kluyveromyces lactis (strain ATCC 8585 / CBS 2359 / DSM 70799 / NBRC 1267 / NRRL Y-1140 / WM37) (Yeast).